A 70-amino-acid chain; its full sequence is Protein SlyX homolog (70 aa).

The protein belongs to the SlyX family.

This Shewanella oneidensis (strain ATCC 700550 / JCM 31522 / CIP 106686 / LMG 19005 / NCIMB 14063 / MR-1) protein is Protein SlyX homolog.